A 421-amino-acid polypeptide reads, in one-letter code: Serine--tRNA ligase (421 aa).

Residue 229–231 participates in L-serine binding; that stretch reads TSE. 260-262 is an ATP binding site; that stretch reads RRE. Glu283 contributes to the L-serine binding site. ATP is bound at residue 347–350; that stretch reads EISS. L-serine is bound at residue Ser381.

The protein belongs to the class-II aminoacyl-tRNA synthetase family. Type-1 seryl-tRNA synthetase subfamily. Homodimer. The tRNA molecule binds across the dimer.

Its subcellular location is the cytoplasm. The catalysed reaction is tRNA(Ser) + L-serine + ATP = L-seryl-tRNA(Ser) + AMP + diphosphate + H(+). The enzyme catalyses tRNA(Sec) + L-serine + ATP = L-seryl-tRNA(Sec) + AMP + diphosphate + H(+). The protein operates within aminoacyl-tRNA biosynthesis; selenocysteinyl-tRNA(Sec) biosynthesis; L-seryl-tRNA(Sec) from L-serine and tRNA(Sec): step 1/1. Functionally, catalyzes the attachment of serine to tRNA(Ser). Is also able to aminoacylate tRNA(Sec) with serine, to form the misacylated tRNA L-seryl-tRNA(Sec), which will be further converted into selenocysteinyl-tRNA(Sec). This chain is Serine--tRNA ligase, found in Fusobacterium nucleatum subsp. nucleatum (strain ATCC 25586 / DSM 15643 / BCRC 10681 / CIP 101130 / JCM 8532 / KCTC 2640 / LMG 13131 / VPI 4355).